The chain runs to 332 residues: 2,3-diketo-L-gulonate reductase (332 aa).

Catalysis depends on H44, which acts as the Proton donor. NAD(+)-binding positions include I168–S174, W224–K225, and G304–E306.

Belongs to the LDH2/MDH2 oxidoreductase family. DlgD subfamily. In terms of assembly, homodimer.

The protein resides in the cytoplasm. The enzyme catalyses 3-dehydro-L-gulonate + NAD(+) = 2,3-dioxo-L-gulonate + NADH + H(+). It catalyses the reaction 3-dehydro-L-gulonate + NADP(+) = 2,3-dioxo-L-gulonate + NADPH + H(+). In terms of biological role, catalyzes the reduction of 2,3-diketo-L-gulonate in the presence of NADH, to form 3-keto-L-gulonate. The sequence is that of 2,3-diketo-L-gulonate reductase from Escherichia coli O127:H6 (strain E2348/69 / EPEC).